Consider the following 282-residue polypeptide: Probable ribosomal RNA small subunit methyltransferase A (282 aa).

6 residues coordinate S-adenosyl-L-methionine: histidine 24, leucine 26, glycine 51, glutamate 72, aspartate 100, and asparagine 115.

Belongs to the class I-like SAM-binding methyltransferase superfamily. rRNA adenine N(6)-methyltransferase family. RsmA subfamily.

The protein resides in the cytoplasm. In terms of biological role, specifically dimethylates two adjacent adenosines in the loop of a conserved hairpin near the 3'-end of 16S rRNA in the 30S particle. May play a critical role in biogenesis of 30S subunits. This is Probable ribosomal RNA small subunit methyltransferase A from Halobacterium salinarum (strain ATCC 29341 / DSM 671 / R1).